Reading from the N-terminus, the 487-residue chain is Sugar transporter ERD6-like 6 (487 aa).

Ser2 bears the N-acetylserine mark. The next 12 helical transmembrane spans lie at 46–66 (ISVL…GFTC), 89–109 (VFGS…GQIA), 115–135 (KGSL…ISFA), 146–166 (LLEG…IAEI), 178–198 (VNQL…LFVP), 201–221 (ILAV…FFIP), 284–304 (LMVG…GVLF), 320–340 (AATF…TWLV), 347–367 (LLLT…AAAF), 389–409 (VGVV…PWLI), 425–445 (IATL…NLLL), and 451–471 (GTFT…TLWV).

The protein belongs to the major facilitator superfamily. Sugar transporter (TC 2.A.1.1) family.

It is found in the membrane. Sugar transporter. The polypeptide is Sugar transporter ERD6-like 6 (Arabidopsis thaliana (Mouse-ear cress)).